Consider the following 256-residue polypeptide: Type III pantothenate kinase 1 (256 aa).

An ATP-binding site is contributed by 6-13; sequence DIGNSHIF. 107-110 is a substrate binding site; sequence GADR. Aspartate 109 acts as the Proton acceptor in catalysis. Residue aspartate 130 coordinates K(+). Threonine 133 serves as a coordination point for ATP. Residue threonine 185 participates in substrate binding.

This sequence belongs to the type III pantothenate kinase family. Homodimer. The cofactor is NH4(+). Requires K(+) as cofactor.

The protein localises to the cytoplasm. The enzyme catalyses (R)-pantothenate + ATP = (R)-4'-phosphopantothenate + ADP + H(+). Its pathway is cofactor biosynthesis; coenzyme A biosynthesis; CoA from (R)-pantothenate: step 1/5. Functionally, catalyzes the phosphorylation of pantothenate (Pan), the first step in CoA biosynthesis. This is Type III pantothenate kinase 1 from Francisella tularensis subsp. holarctica (strain LVS).